We begin with the raw amino-acid sequence, 91 residues long: UPF0250 protein PFLU_5418 (91 aa).

It belongs to the UPF0250 family.

This chain is UPF0250 protein PFLU_5418, found in Pseudomonas fluorescens (strain SBW25).